The sequence spans 142 residues: Nucleoside diphosphate kinase (142 aa).

Lys-10, Phe-58, Arg-86, Thr-92, Arg-103, and Asn-113 together coordinate ATP. His-116 acts as the Pros-phosphohistidine intermediate in catalysis.

This sequence belongs to the NDK family. In terms of assembly, homotetramer. The cofactor is Mg(2+).

Its subcellular location is the cytoplasm. The catalysed reaction is a 2'-deoxyribonucleoside 5'-diphosphate + ATP = a 2'-deoxyribonucleoside 5'-triphosphate + ADP. The enzyme catalyses a ribonucleoside 5'-diphosphate + ATP = a ribonucleoside 5'-triphosphate + ADP. Functionally, major role in the synthesis of nucleoside triphosphates other than ATP. The ATP gamma phosphate is transferred to the NDP beta phosphate via a ping-pong mechanism, using a phosphorylated active-site intermediate. The sequence is that of Nucleoside diphosphate kinase from Ehrlichia chaffeensis (strain ATCC CRL-10679 / Arkansas).